The following is a 454-amino-acid chain: Probable diacyglycerol O-acyltransferase tgs2 (454 aa).

The active-site Proton acceptor is histidine 139.

It belongs to the long-chain O-acyltransferase family.

It carries out the reaction an acyl-CoA + a 1,2-diacyl-sn-glycerol = a triacyl-sn-glycerol + CoA. It catalyses the reaction a long chain fatty alcohol + a fatty acyl-CoA = a wax ester + CoA. The protein operates within glycerolipid metabolism; triacylglycerol biosynthesis. Functionally, catalyzes the terminal and only committed step in triacylglycerol synthesis by using diacylglycerol and fatty acyl CoA as substrates. Required for storage lipid synthesis. This chain is Probable diacyglycerol O-acyltransferase tgs2 (tgs2), found in Mycobacterium tuberculosis (strain CDC 1551 / Oshkosh).